Here is a 194-residue protein sequence, read N- to C-terminus: dTTP/UTP pyrophosphatase (194 aa).

Asp77 (proton acceptor) is an active-site residue.

Belongs to the Maf family. YhdE subfamily. The cofactor is a divalent metal cation.

It is found in the cytoplasm. It catalyses the reaction dTTP + H2O = dTMP + diphosphate + H(+). The enzyme catalyses UTP + H2O = UMP + diphosphate + H(+). In terms of biological role, nucleoside triphosphate pyrophosphatase that hydrolyzes dTTP and UTP. May have a dual role in cell division arrest and in preventing the incorporation of modified nucleotides into cellular nucleic acids. The polypeptide is dTTP/UTP pyrophosphatase (Flavobacterium johnsoniae (strain ATCC 17061 / DSM 2064 / JCM 8514 / BCRC 14874 / CCUG 350202 / NBRC 14942 / NCIMB 11054 / UW101) (Cytophaga johnsonae)).